Here is a 364-residue protein sequence, read N- to C-terminus: tRNA/tmRNA (uracil-C(5))-methyltransferase (364 aa).

Residues glutamine 188, tyrosine 216, asparagine 221, glutamate 237, and aspartate 297 each contribute to the S-adenosyl-L-methionine site. Cysteine 322 serves as the catalytic Nucleophile. Residue glutamate 356 is the Proton acceptor of the active site.

It belongs to the class I-like SAM-binding methyltransferase superfamily. RNA M5U methyltransferase family. TrmA subfamily.

It catalyses the reaction uridine(54) in tRNA + S-adenosyl-L-methionine = 5-methyluridine(54) in tRNA + S-adenosyl-L-homocysteine + H(+). The enzyme catalyses uridine(341) in tmRNA + S-adenosyl-L-methionine = 5-methyluridine(341) in tmRNA + S-adenosyl-L-homocysteine + H(+). Functionally, dual-specificity methyltransferase that catalyzes the formation of 5-methyluridine at position 54 (m5U54) in all tRNAs, and that of position 341 (m5U341) in tmRNA (transfer-mRNA). In Mannheimia succiniciproducens (strain KCTC 0769BP / MBEL55E), this protein is tRNA/tmRNA (uracil-C(5))-methyltransferase.